The primary structure comprises 261 residues: tRNA U34 carboxymethyltransferase (261 aa).

Carboxy-S-adenosyl-L-methionine contacts are provided by residues K25, W39, K44, G63, 114–115 (VE), Y135, and R250.

Belongs to the class I-like SAM-binding methyltransferase superfamily. CmoB family. As to quaternary structure, homotetramer.

It catalyses the reaction carboxy-S-adenosyl-L-methionine + 5-hydroxyuridine(34) in tRNA = 5-carboxymethoxyuridine(34) in tRNA + S-adenosyl-L-homocysteine + H(+). Its function is as follows. Catalyzes carboxymethyl transfer from carboxy-S-adenosyl-L-methionine (Cx-SAM) to 5-hydroxyuridine (ho5U) to form 5-carboxymethoxyuridine (cmo5U) at position 34 in tRNAs. In Helicobacter pylori (strain G27), this protein is tRNA U34 carboxymethyltransferase.